Reading from the N-terminus, the 466-residue chain is Cell division protein FtsP (466 aa).

Positions 1–28 (MNYSRRSLFKKTLIATALSALPATLLAA) form a signal peptide, tat-type signal.

The protein belongs to the FtsP family. Post-translationally, predicted to be exported by the Tat system. The position of the signal peptide cleavage has not been experimentally proven.

The protein resides in the periplasm. In terms of biological role, cell division protein that is required for growth during stress conditions. May be involved in protecting or stabilizing the divisomal assembly under conditions of stress. This chain is Cell division protein FtsP, found in Actinobacillus succinogenes (strain ATCC 55618 / DSM 22257 / CCUG 43843 / 130Z).